We begin with the raw amino-acid sequence, 373 residues long: Histidinol-phosphate aminotransferase (373 aa).

Over residues 1 to 10 (MTGVPGSSIT) the composition is skewed to polar residues. Positions 1-45 (MTGVPGSSITLDDLPLRDDLRGKSPYGAPQLSVPVRLNTNENPHP) are disordered. The residue at position 237 (Lys237) is an N6-(pyridoxal phosphate)lysine.

Belongs to the class-II pyridoxal-phosphate-dependent aminotransferase family. Histidinol-phosphate aminotransferase subfamily. As to quaternary structure, homodimer. It depends on pyridoxal 5'-phosphate as a cofactor.

It catalyses the reaction L-histidinol phosphate + 2-oxoglutarate = 3-(imidazol-4-yl)-2-oxopropyl phosphate + L-glutamate. It functions in the pathway amino-acid biosynthesis; L-histidine biosynthesis; L-histidine from 5-phospho-alpha-D-ribose 1-diphosphate: step 7/9. This is Histidinol-phosphate aminotransferase from Mycolicibacterium vanbaalenii (strain DSM 7251 / JCM 13017 / BCRC 16820 / KCTC 9966 / NRRL B-24157 / PYR-1) (Mycobacterium vanbaalenii).